Consider the following 198-residue polypeptide: Ribosomal RNA small subunit methyltransferase G (198 aa).

Residues G74, F79, 123–124 (IQ), and R136 contribute to the S-adenosyl-L-methionine site.

This sequence belongs to the methyltransferase superfamily. RNA methyltransferase RsmG family.

Its subcellular location is the cytoplasm. The catalysed reaction is guanosine(527) in 16S rRNA + S-adenosyl-L-methionine = N(7)-methylguanosine(527) in 16S rRNA + S-adenosyl-L-homocysteine. Its function is as follows. Specifically methylates the N7 position of guanine in position 527 of 16S rRNA. This is Ribosomal RNA small subunit methyltransferase G from Orientia tsutsugamushi (strain Ikeda) (Rickettsia tsutsugamushi).